Reading from the N-terminus, the 172-residue chain is Type II secretion system protein H (172 aa).

A propeptide spans 1–6 (MRASRG) (leader sequence). Position 7 is an N-methylphenylalanine (F7). A helical membrane pass occupies residues 7–27 (FTLIELMVVMVIISVLIGLAV).

The protein belongs to the GSP H family. Type II secretion is composed of four main components: the outer membrane complex, the inner membrane complex, the cytoplasmic secretion ATPase and the periplasm-spanning pseudopilus. Forms the tip of the type II pseudopilus by interacting with XcpV, XcpW and XcpX. Interacts with core component XcpT. In terms of processing, cleaved by prepilin peptidase. Post-translationally, methylated by prepilin peptidase at the amino group of the N-terminal phenylalanine once the leader sequence is cleaved by prepilin peptidase.

The protein localises to the cell inner membrane. Its function is as follows. Component of the type II secretion system required for the energy-dependent secretion of extracellular factors such as proteases and toxins from the periplasm. Part of the pseudopilus tip complex that is critical for the recognition and binding of secretion substrates. Type II pseudopilus confers increased bacterial adhesive capabilities. This Pseudomonas aeruginosa (strain ATCC 15692 / DSM 22644 / CIP 104116 / JCM 14847 / LMG 12228 / 1C / PRS 101 / PAO1) protein is Type II secretion system protein H (xcpU).